The following is a 704-amino-acid chain: MRLAFCVLLCAGSLGLCLAFPKETVRWCTVSSQEASKCSSFRHNMKKILPVEGPHVSCVKRTSYLECIRAILANEADAVTIDGGLVFEAGLAPYNLKPVVAEFYGSKDDPQTHYYAVAVVKKGSDFQLSQLRGKKSCHTGLGWSAGWNIPMGILLPPDSGEEAAAKFFSSSCVPCADRMAFPKMCQLCAGKGVEKCACSNHERYFGYSGAFKCLQEDVGDVAFVRHVTVFENLPDKADRDQYELLCKDNTRRPVDDYENCYLAQVPSHAVVARSVDGKEDLIWELLNQAQENFGKDKSAEFQLFSSSHGKDLLFTDACLGFLRVPPKMDAKLYLGYEYFAAIQHLRRVQGTEEPQRVMWCAVGQHERTKCDSWSVLSGGILNCNSEDTMEDCIAAIAKGEADAMSLDGGFLYTAGKCGLVPVLAENYLSQDGKERFGSKCVNTPVEGYYVVAVVKKSDADLTWNSLRGKKSCHIAVGTSAGWIIPMGFIYNQTGSCKLDEFFSQSCAPGSDPESRLCALCSGSISGQPAHTCAPNSHEGYHGFSGALRCLVEKGDVAFVKHPTVLQNTDGRNPEAWAKDLKQEDFQLLCPDGTRKPVTEAQSCHLAAVPSHAVVSRKDKADFVRRMLFNQQELFGRNGFEYMMFQLFKSSTEDLLFSDDTECLANLQDKITYQKYLGPEYLQAIANVRQCFPSELLDACTFHGN.

An N-terminal signal peptide occupies residues 1 to 19; the sequence is MRLAFCVLLCAGSLGLCLA. Transferrin-like domains lie at 25–347 and 357–689; these read VRWC…HLRR and VMWC…NVRQ. 16 disulfides stabilise this stretch: C28/C67, C38/C58, C137/C213, C172/C188, C175/C196, C185/C198, C246/C260, C360/C392, C370/C383, C417/C699, C440/C662, C472/C549, C496/C690, C506/C520, C517/C532, and C589/C603. N491 is a glycosylation site (N-linked (GlcNAc...) asparagine).

The protein belongs to the transferrin family. As to quaternary structure, monomer. Interacts (via transferrin-like domain 2) with CA2. In terms of processing, N-glycosylated. As to expression, blood plasma (at protein level).

It localises to the secreted. In terms of biological role, inhibitor for carbonic anhydrase 2 (CA2). Does not bind iron ions. This is Inhibitor of carbonic anhydrase from Sus scrofa (Pig).